The primary structure comprises 385 residues: 1-deoxy-D-xylulose 5-phosphate reductoisomerase 1 (385 aa).

Residues Thr11, Gly12, Ser13, Ile14, Asn39, and Asn122 each coordinate NADPH. Residue Lys123 coordinates 1-deoxy-D-xylulose 5-phosphate. Glu124 is a binding site for NADPH. Asp148 is a binding site for Mn(2+). 1-deoxy-D-xylulose 5-phosphate contacts are provided by Ser149, Glu150, Ser174, and His197. Mn(2+) is bound at residue Glu150. Gly203 lines the NADPH pocket. 1-deoxy-D-xylulose 5-phosphate is bound by residues Ser210, Asn215, Lys216, and Glu219. Residue Glu219 participates in Mn(2+) binding.

It belongs to the DXR family. Requires Mg(2+) as cofactor. It depends on Mn(2+) as a cofactor.

The catalysed reaction is 2-C-methyl-D-erythritol 4-phosphate + NADP(+) = 1-deoxy-D-xylulose 5-phosphate + NADPH + H(+). It participates in isoprenoid biosynthesis; isopentenyl diphosphate biosynthesis via DXP pathway; isopentenyl diphosphate from 1-deoxy-D-xylulose 5-phosphate: step 1/6. Catalyzes the NADPH-dependent rearrangement and reduction of 1-deoxy-D-xylulose-5-phosphate (DXP) to 2-C-methyl-D-erythritol 4-phosphate (MEP). The protein is 1-deoxy-D-xylulose 5-phosphate reductoisomerase 1 of Bacillus thuringiensis subsp. konkukian (strain 97-27).